A 237-amino-acid polypeptide reads, in one-letter code: Class B acid phosphatase (237 aa).

The signal sequence occupies residues 1 to 25 (MRKITLALSAACLLFSLNNAVVARA). D69 functions as the Nucleophile in the catalytic mechanism. D69 and D71 together coordinate Mg(2+). Residue D71 is the Proton donor of the active site. Substrate-binding positions include 137-138 (TG) and K177. D192 contacts Mg(2+).

It belongs to the class B bacterial acid phosphatase family. Homotetramer. Mg(2+) serves as cofactor.

The protein localises to the periplasm. The catalysed reaction is a phosphate monoester + H2O = an alcohol + phosphate. Dephosphorylates several organic phosphate monoesters. Also has a phosphotransferase activity catalyzing the transfer of low-energy phosphate groups from organic phosphate monoesters to free hydroxyl groups of various organic compounds. The chain is Class B acid phosphatase from Enterobacter sp. (strain 638).